A 463-amino-acid chain; its full sequence is Cysteine--tRNA ligase (463 aa).

Cys-29 serves as a coordination point for Zn(2+). A 'HIGH' region motif is present at residues 31–41; it reads ATPQTQPHIGH. 3 residues coordinate Zn(2+): Cys-212, His-237, and Glu-241. The 'KMSKS' region motif lies at 268-272; it reads KMSKS. Lys-271 is an ATP binding site.

Belongs to the class-I aminoacyl-tRNA synthetase family. Monomer. Zn(2+) is required as a cofactor.

It localises to the cytoplasm. The enzyme catalyses tRNA(Cys) + L-cysteine + ATP = L-cysteinyl-tRNA(Cys) + AMP + diphosphate. The protein is Cysteine--tRNA ligase of Corynebacterium diphtheriae (strain ATCC 700971 / NCTC 13129 / Biotype gravis).